The primary structure comprises 241 residues: MQRGDGRNFNQLRPITITPGFQSFAEGSVLIEQGKTRVICSVSMEDRVPQFLRNSGTGWVTAEYSMLPRSTVTRTQRDSSAGKISGRSQEIQRLIGRSLRSCVDMAALGERSFIVDCDVIQADAGTRTASITGSYIALYLAFKKMVDMGILSKMPFTSQVAAVSVSIFKGNIVLDPCYDEDFQAEVDFNLVMNDRGEFVEIQGTAEGKAFSRDTLDQVLKLGEAGIRQLFDIQKGITQPQL.

Phosphate-binding positions include Arg-87 and 125 to 127 (GTR).

This sequence belongs to the RNase PH family. As to quaternary structure, homohexameric ring arranged as a trimer of dimers.

It carries out the reaction tRNA(n+1) + phosphate = tRNA(n) + a ribonucleoside 5'-diphosphate. Phosphorolytic 3'-5' exoribonuclease that plays an important role in tRNA 3'-end maturation. Removes nucleotide residues following the 3'-CCA terminus of tRNAs; can also add nucleotides to the ends of RNA molecules by using nucleoside diphosphates as substrates, but this may not be physiologically important. Probably plays a role in initiation of 16S rRNA degradation (leading to ribosome degradation) during starvation. This chain is Ribonuclease PH, found in Dehalococcoides mccartyi (strain ATCC BAA-2100 / JCM 16839 / KCTC 5957 / BAV1).